A 209-amino-acid polypeptide reads, in one-letter code: MPLIGDKFPEMEVQTTHGPMELPDEFEGKWFILFSHPADFTPVCTTEFVAFQEVYPELRELDCELVGLSVDQVFSHIKWIEWIAENLDTEIEFPVIADTGRVADTLGLIHPARPTNTVRAVFVVDPEGIIRAILYYPQELGRNIPEIVRMIRAFRVIDAEGVAAPANWPDNQLIGDHVIVPPASDIETARKRKDEYECYDWWLCTQSRG.

Residues proline 2–valine 156 form the Thioredoxin domain. Catalysis depends on cysteine 44, which acts as the Cysteine sulfenic acid (-SOH) intermediate. Substrate is bound at residue arginine 119. Cysteine 198 and cysteine 204 are disulfide-bonded.

The protein belongs to the peroxiredoxin family. Prx6 subfamily. Homodecamer. Pentamer of dimers that assemble into a ring structure.

It localises to the cytoplasm. The catalysed reaction is a hydroperoxide + [thioredoxin]-dithiol = an alcohol + [thioredoxin]-disulfide + H2O. Functionally, thiol-specific peroxidase that catalyzes the reduction of hydrogen peroxide and organic hydroperoxides to water and alcohols, respectively. Plays a role in cell protection against oxidative stress by detoxifying peroxides. This is Peroxiredoxin from Methanothermobacter thermautotrophicus (strain ATCC 29096 / DSM 1053 / JCM 10044 / NBRC 100330 / Delta H) (Methanobacterium thermoautotrophicum).